The primary structure comprises 525 residues: Chromaffin granule amine transporter (525 aa).

Residues 1–21 lie on the Cytoplasmic side of the membrane; that stretch reads MLRTILDAPQRLLKEGRASRQ. A helical membrane pass occupies residues 22–42; sequence LVLVVVFVALLLDNMLFTVVV. The Lumenal, vesicle portion of the chain corresponds to 43–138; that stretch reads PIVPTFLYDM…TGFLEEEITR (96 aa). N-linked (GlcNAc...) asparagine glycosylation is found at Asn-58, Asn-87, and Asn-104. The helical transmembrane segment at 139 to 158 threads the bilayer; the sequence is VGVLFASKAVMQLLVNPFVG. At 159-167 the chain is on the cytoplasmic side; the sequence is PLTNRIGYH. The helical transmembrane segment at 168–188 threads the bilayer; sequence IPMFAGFVIMFLSTVMFAFSG. The Lumenal, vesicle portion of the chain corresponds to 189-197; it reads TYTLLFVAR. A helical membrane pass occupies residues 198 to 218; that stretch reads TLQGIGSSFSSVAGLGMLASV. Residues 219 to 227 lie on the Cytoplasmic side of the membrane; the sequence is YTDDHERGR. Residues 228–250 traverse the membrane as a helical segment; the sequence is AMGTALGGLALGLLVGAPFGSVM. The Lumenal, vesicle segment spans residues 251–256; it reads YEFVGK. The helical transmembrane segment at 257 to 279 threads the bilayer; it reads SAPFLILAFLALLDGALQLCILQ. Residues 280 to 299 lie on the Cytoplasmic side of the membrane; sequence PSKVSPESAKGTPLFMLLKD. A helical membrane pass occupies residues 300–319; it reads PYILVAAGSICFANMGVAIL. The Lumenal, vesicle portion of the chain corresponds to 320–335; the sequence is EPTLPIWMMQTMCSPK. A helical membrane pass occupies residues 336–360; it reads WQLGLAFLPASVSYLIGTNLFGVLA. Over 361–365 the chain is Cytoplasmic; sequence NKMGR. Residues 366-386 traverse the membrane as a helical segment; sequence WLCSLIGMLVVGTSLLCVPLA. Residues 387-397 lie on the Lumenal, vesicle side of the membrane; sequence HNIFGLIGPNA. The helical transmembrane segment at 398-418 threads the bilayer; sequence GLGLAIGMVDSSMMPIMGHLV. The Cytoplasmic segment spans residues 419–422; the sequence is DLRH. Residues 423–443 form a helical membrane-spanning segment; that stretch reads TSVYGSVYAIADVAFCMGFAI. Topologically, residues 444–448 are lumenal, vesicle; sequence GPSTG. Residues 449–470 form a helical membrane-spanning segment; the sequence is GAIVKAIGFPWLMVITGVINIV. At 471–525 the chain is on the cytoplasmic side; the sequence is YAPLCYYLRSPPAKEEKLAILSQDCPMETRMYATQKPTKEFPLGEDSDEEPDHEE. Residues 503–525 form a disordered region; sequence ATQKPTKEFPLGEDSDEEPDHEE. The segment covering 513–525 has biased composition (acidic residues); sequence LGEDSDEEPDHEE.

It belongs to the major facilitator superfamily. Vesicular transporter family. As to expression, expressed primarily in neuroendocrine tissues. Highly expressed in chromaffin cells of the adrenal medulla (at protein level). Detected in peripheral sympathetic ganglia (at protein level). Found in some paracrine cells in stomach and duodenum (at protein level). Expressed in substantia nigra. In terms of tissue distribution, expressed in gastrointestinal tract.

The protein resides in the cytoplasmic vesicle. It is found in the secretory vesicle membrane. It localises to the secretory vesicle. Its subcellular location is the synaptic vesicle membrane. The protein localises to the endoplasmic reticulum membrane. It carries out the reaction serotonin(in) + 2 H(+)(out) = serotonin(out) + 2 H(+)(in). The enzyme catalyses (R)-noradrenaline(in) + 2 H(+)(out) = (R)-noradrenaline(out) + 2 H(+)(in). It catalyses the reaction dopamine(in) + 2 H(+)(out) = dopamine(out) + 2 H(+)(in). With respect to regulation, strongly inhibited by reserpine. Also inhibited to a lesser extent by ketanserin and fenfluramine. Not significantly inhibited by tetrabenazine. In terms of biological role, electrogenic antiporter that exchanges one cationic monoamine with two intravesicular protons across the membrane of secretory and synaptic vesicles. Uses the electrochemical proton gradient established by the V-type proton-pump ATPase to accumulate high concentrations of monoamines inside the vesicles prior to their release via exocytosis. Transports catecholamines and indolamines with higher affinity for serotonin. Regulates the transvesicular monoaminergic gradient that determines the quantal size. Mediates presynaptic monoaminergic vesicle transport in the amygdala and prefrontal brain regions related with emotion processing in response to environmental stimuli. Its function is as follows. Unable to uptake serotonin. The sequence is that of Chromaffin granule amine transporter (SLC18A1) from Homo sapiens (Human).